A 505-amino-acid polypeptide reads, in one-letter code: Calcium/calmodulin-dependent protein kinase kinase 1 (505 aa).

Residues 28–66 are disordered; that stretch reads LEEADEGPEPARNGVDPPPRARAASVIPGSASRPTPVRP. A phosphoserine mark is found at serine 67 and serine 74. Residue arginine 78 is modified to Asymmetric dimethylarginine. The interval 84–105 is disordered; that stretch reads LGAQVGPYSTGPASHISPRSWR. At serine 100 the chain carries Phosphoserine. A Phosphothreonine modification is found at threonine 108. The 282-residue stretch at 128 to 409 folds into the Protein kinase domain; the sequence is YKLQSEIGKG…VSDIKLHPWV (282 aa). ATP contacts are provided by residues 134-142 and lysine 157; that span reads IGKGAYGVV. Residues 167-189 are RP domain; the sequence is QYGFPRRPPPRGSQATQGGPAKQ. Residue aspartate 275 is the Proton acceptor of the active site. Positions 435–440 are autoinhibitory domain; the sequence is KNSVRL. Positions 438–463 are calmodulin-binding; sequence VRLIPSWTTVILVKSMLRKRSFGNPF. Phosphoserine occurs at positions 458, 475, and 492. The tract at residues 460–505 is disordered; the sequence is GNPFEPQARREERSMSAPGSLLMKEGCGEGCKSPELPGVQEDEAAS.

It belongs to the protein kinase superfamily. Ser/Thr protein kinase family. In terms of assembly, interacts with CAMK4 and calmodulin. Appears to be autophosphorylated in a Ca(2+)/calmodulin-dependent manner. Phosphorylated at multiple sites by PRCAKA/PKA. Phosphorylation of Ser-458 is blocked upon binding to Ca(2+)/calmodulin. In vitro, phosphorylated by CAMK1 and CAMK4. Widely expressed. Differentially expressed in various brain regions.

It is found in the cytoplasm. It localises to the nucleus. It carries out the reaction L-seryl-[protein] + ATP = O-phospho-L-seryl-[protein] + ADP + H(+). The catalysed reaction is L-threonyl-[protein] + ATP = O-phospho-L-threonyl-[protein] + ADP + H(+). Activated by Ca(2+)/calmodulin. Binding of calmodulin may relieve intrasteric autoinhibition. Partially inhibited upon phosphorylation by PRCAKA/PKA. May be regulated through phosphorylation by CAMK1 and CAMK4. Calcium/calmodulin-dependent protein kinase that belongs to a proposed calcium-triggered signaling cascade involved in a number of cellular processes. Phosphorylates CAMK1, CAMK1D, CAMK1G and CAMK4. Involved in regulating cell apoptosis. Promotes cell survival by phosphorylating AKT1/PKB that inhibits pro-apoptotic BAD/Bcl2-antagonist of cell death. In Mus musculus (Mouse), this protein is Calcium/calmodulin-dependent protein kinase kinase 1 (Camkk1).